We begin with the raw amino-acid sequence, 238 residues long: Small ribosomal subunit protein uS2c (238 aa).

It belongs to the universal ribosomal protein uS2 family.

The protein localises to the plastid. Its subcellular location is the chloroplast. The sequence is that of Small ribosomal subunit protein uS2c (rps2) from Nuphar advena (Common spatterdock).